We begin with the raw amino-acid sequence, 187 residues long: UPF0167 protein MT2352 (187 aa).

Belongs to the UPF0167 family.

In Mycobacterium tuberculosis (strain CDC 1551 / Oshkosh), this protein is UPF0167 protein MT2352.